Here is a 348-residue protein sequence, read N- to C-terminus: D-erythrose-4-phosphate dehydrogenase (348 aa).

12 to 13 (RI) is an NAD(+) binding site. Substrate is bound by residues 154-156 (SCT), arginine 200, 213-214 (TR), and arginine 236. The active-site Nucleophile is cysteine 155. NAD(+) is bound at residue asparagine 318.

It belongs to the glyceraldehyde-3-phosphate dehydrogenase family. Epd subfamily. Homotetramer.

It is found in the cytoplasm. It catalyses the reaction D-erythrose 4-phosphate + NAD(+) + H2O = 4-phospho-D-erythronate + NADH + 2 H(+). Its pathway is cofactor biosynthesis; pyridoxine 5'-phosphate biosynthesis; pyridoxine 5'-phosphate from D-erythrose 4-phosphate: step 1/5. Functionally, catalyzes the NAD-dependent conversion of D-erythrose 4-phosphate to 4-phosphoerythronate. This chain is D-erythrose-4-phosphate dehydrogenase, found in Erwinia tasmaniensis (strain DSM 17950 / CFBP 7177 / CIP 109463 / NCPPB 4357 / Et1/99).